The primary structure comprises 80 residues: Cell division protein ZapB (80 aa).

Residues F3–E80 are a coiled coil.

Belongs to the ZapB family. As to quaternary structure, homodimer. The ends of the coiled-coil dimer bind to each other, forming polymers. Interacts with FtsZ.

The protein resides in the cytoplasm. In terms of biological role, non-essential, abundant cell division factor that is required for proper Z-ring formation. It is recruited early to the divisome by direct interaction with FtsZ, stimulating Z-ring assembly and thereby promoting cell division earlier in the cell cycle. Its recruitment to the Z-ring requires functional FtsA or ZipA. This chain is Cell division protein ZapB, found in Vibrio cholerae serotype O1 (strain ATCC 39541 / Classical Ogawa 395 / O395).